The chain runs to 294 residues: MSVEKPVAAGRQNSKATGRHKGWQAKLHMQLECAITGRGMKTVMAELHHYGPLRVQRPFYPEQDTAHIYLLHPPGGVVGGDGLDISITASSQAHGLLTTPGATKFYRSAGQTAHVSQTLTVQAGGTLEWFPQENIFFPGARVQMDTRIDLHGDAHFMGWEISCLGRPVNSEVFHEGKIDARFRISRDRKPLLIERLKVDQPSHLNAASGLRNFPMQAIFVATGSNEELLEQARECIEKQATDMPCGLTLIDDILVMRVLGTRCEKIQALMLPVWQLLRQATLNKPAVIPRIWNT.

The segment at 1-22 (MSVEKPVAAGRQNSKATGRHKG) is disordered.

This sequence belongs to the UreD family. UreD, UreF and UreG form a complex that acts as a GTP-hydrolysis-dependent molecular chaperone, activating the urease apoprotein by helping to assemble the nickel containing metallocenter of UreC. The UreE protein probably delivers the nickel.

The protein localises to the cytoplasm. In terms of biological role, required for maturation of urease via the functional incorporation of the urease nickel metallocenter. This chain is Urease accessory protein UreD, found in Alcanivorax borkumensis (strain ATCC 700651 / DSM 11573 / NCIMB 13689 / SK2).